Reading from the N-terminus, the 116-residue chain is Small ribosomal subunit protein uS13 (116 aa).

A disordered region spans residues 92 to 116; it reads RRGLPVRGQNTKNNARTRKGTKRNR. Residues 106–116 show a composition bias toward basic residues; that stretch reads ARTRKGTKRNR.

It belongs to the universal ribosomal protein uS13 family. As to quaternary structure, part of the 30S ribosomal subunit. Forms a loose heterodimer with protein S19. Forms two bridges to the 50S subunit in the 70S ribosome.

Located at the top of the head of the 30S subunit, it contacts several helices of the 16S rRNA. In the 70S ribosome it contacts the 23S rRNA (bridge B1a) and protein L5 of the 50S subunit (bridge B1b), connecting the 2 subunits; these bridges are implicated in subunit movement. Contacts the tRNAs in the A and P-sites. The polypeptide is Small ribosomal subunit protein uS13 (Lactobacillus acidophilus (strain ATCC 700396 / NCK56 / N2 / NCFM)).